Here is a 663-residue protein sequence, read N- to C-terminus: COBRA-like protein 9 (663 aa).

The first 23 residues, 1 to 23 (MGVLLPIFFGVLLLFTVTPPSMS), serve as a signal peptide directing secretion. N-linked (GlcNAc...) asparagine glycans are attached at residues N63, N111, N121, N169, N203, N326, N355, N397, N409, N429, N470, N550, and N561. S638 carries the GPI-anchor amidated serine lipid modification. Residues 639-663 (GGRRNGAITVLSFITFYVAAFMVLL) constitute a propeptide, removed in mature form.

It belongs to the COBRA family. In terms of tissue distribution, expressed only in flowers.

It is found in the cell membrane. In Arabidopsis thaliana (Mouse-ear cress), this protein is COBRA-like protein 9 (COBL9).